A 440-amino-acid chain; its full sequence is Putative F-box/LRR-repeat protein At5g15620 (440 aa).

Residues 1–52 enclose the F-box domain; the sequence is MDRFSNLPDDVIYHIVSFLSAKEATCLKFVSKNFQNLVTIKRNVVFHHWESF. LRR repeat units lie at residues 4–31, 126–153, 156–181, 194–205, 210–235, 264–289, and 318–343; these read FSNL…KFVS, LKLG…ILDS, FYAS…VIDR, SSPTLKRLTLRR, PEPE…KYKD, YWLN…SIKV, and EADF…TIEG.

In Arabidopsis thaliana (Mouse-ear cress), this protein is Putative F-box/LRR-repeat protein At5g15620.